The primary structure comprises 104 residues: Large ribosomal subunit protein uL24 (104 aa).

The protein belongs to the universal ribosomal protein uL24 family. As to quaternary structure, part of the 50S ribosomal subunit.

Functionally, one of two assembly initiator proteins, it binds directly to the 5'-end of the 23S rRNA, where it nucleates assembly of the 50S subunit. One of the proteins that surrounds the polypeptide exit tunnel on the outside of the subunit. This is Large ribosomal subunit protein uL24 from Pseudomonas aeruginosa (strain LESB58).